A 28-amino-acid chain; its full sequence is Fibrinogen alpha chain (28 aa).

Residue S3 is modified to Phosphoserine.

In terms of assembly, heterohexamer; disulfide linked. Contains 2 sets of 3 non-identical chains (alpha, beta and gamma). The 2 heterotrimers are in head to head conformation with the N-termini in a small central domain. In terms of processing, conversion of fibrinogen to fibrin is triggered by thrombin, which cleaves fibrinopeptides A and B from alpha and beta chains, and thus exposes the N-terminal polymerization sites responsible for the formation of the soft clot. The soft clot is converted into the hard clot by factor XIIIA which catalyzes the epsilon-(gamma-glutamyl)lysine cross-linking between gamma chains (stronger) and between alpha chains (weaker) of different monomers. Post-translationally, forms F13A-mediated cross-links between a glutamine and the epsilon-amino group of a lysine residue, forming fibronectin-fibrinogen heteropolymers.

It localises to the secreted. In terms of biological role, cleaved by the protease thrombin to yield monomers which, together with fibrinogen beta (FGB) and fibrinogen gamma (FGG), polymerize to form an insoluble fibrin matrix. Fibrin has a major function in hemostasis as one of the primary components of blood clots. In addition, functions during the early stages of wound repair to stabilize the lesion and guide cell migration during re-epithelialization. Was originally thought to be essential for platelet aggregation, based on in vitro studies using anticoagulated blood. However, subsequent studies have shown that it is not absolutely required for thrombus formation in vivo. Enhances expression of SELP in activated platelets via an ITGB3-dependent pathway. Maternal fibrinogen is essential for successful pregnancy. Fibrin deposition is also associated with infection, where it protects against IFNG-mediated hemorrhage. May also facilitate the immune response via both innate and T-cell mediated pathways. This Canis lupus familiaris (Dog) protein is Fibrinogen alpha chain (FGA).